We begin with the raw amino-acid sequence, 691 residues long: MARAFPLERVRNIGIAAHIDAGKTTCTERILFYSGVVHKMGEVHDGAAVTDWMAQERERGITITAAAISTTWNDHRINIIDTPGHVDFTIEVERSMRVLDGVIAVFCAVGGVQPQSETVWRQADRYSVPRMVFVNKMDRTGADFLKVHGQIKNRLKANAIPIQLPIGAEGDLSGIIDLVKNKAFIYKDDLGKDIEETEIPDHMKELAAEWRAKLMECVAETDEELIEVFLETEELSEAQLASGIREGVLNHGLVPLLCGSAFKNKGVQLLLDAVVDYLPAPVDVPPIQGLLPNGKEAVRPSDDNAPFSALAFKVMADPYGKLTFVRMYSGVLEKGSYVLNSTKNEKERISRLIILKADDREEVDALRAGDLGAVLGLKNTTTGDTLCTTDDPIVLETLYIPEPVISVAVEPKTKGDMEKLSKALLSLAEEDPTFRVSTDPETSQTVIAGMGELHLEILVDRMLREFKVEANIGAPQVSYRETIRASSKGEGKFARQTGGKGQYGHVVIEMEPGEPGSGFEFVNKIVGGIVPKEYIKPAESGMRETCESGVIAGYPLIDVKVTMVDGSYHDVDSSEMAFKIAGSMAFKDGVKKCNPVLLEPMMKVEVEIPEDFLGSIIGDLSSRRGQVEGQSIDDGLSKVQSKVPLAEMFGYATQLRSMTQGRGIFSMEFSHYEEVPRNVAEAIISKNQGNS.

Residues 8 to 282 enclose the tr-type G domain; it reads ERVRNIGIAA…AVVDYLPAPV (275 aa). GTP contacts are provided by residues 17 to 24, 81 to 85, and 135 to 138; these read AHIDAGKT, DTPGH, and NKMD.

It belongs to the TRAFAC class translation factor GTPase superfamily. Classic translation factor GTPase family. EF-G/EF-2 subfamily.

It is found in the cytoplasm. In terms of biological role, catalyzes the GTP-dependent ribosomal translocation step during translation elongation. During this step, the ribosome changes from the pre-translocational (PRE) to the post-translocational (POST) state as the newly formed A-site-bound peptidyl-tRNA and P-site-bound deacylated tRNA move to the P and E sites, respectively. Catalyzes the coordinated movement of the two tRNA molecules, the mRNA and conformational changes in the ribosome. In Prochlorococcus marinus (strain MIT 9303), this protein is Elongation factor G.